The primary structure comprises 322 residues: Glycerate dehydrogenase (322 aa).

NAD(+) contacts are provided by residues 158 to 159 (SI), Asp-178, 239 to 241 (TAR), and Asp-265. The active site involves Arg-241. Glu-270 is an active-site residue. The Proton donor role is filled by His-288. Residue 288–291 (HIGS) participates in NAD(+) binding.

Belongs to the D-isomer specific 2-hydroxyacid dehydrogenase family. Homodimer.

It catalyses the reaction (R)-glycerate + NAD(+) = 3-hydroxypyruvate + NADH + H(+). The protein operates within one-carbon metabolism; formaldehyde assimilation via serine pathway. In terms of biological role, active on hydroxypyruvate and glyoxylate. The polypeptide is Glycerate dehydrogenase (Hyphomicrobium methylovorum).